Consider the following 325-residue polypeptide: Beta-ketoacyl-[acyl-carrier-protein] synthase III 2 (325 aa).

Catalysis depends on residues Cys-113 and His-250. An ACP-binding region spans residues 251–255 (SANLR). The active site involves Asn-280.

This sequence belongs to the thiolase-like superfamily. FabH family. In terms of assembly, homodimer.

It is found in the cytoplasm. It carries out the reaction 3-methylbutanoyl-CoA + malonyl-[ACP] + H(+) = 5-methyl-3-oxohexanoyl-[ACP] + CO2 + CoA. The catalysed reaction is 2-methylpropanoyl-CoA + malonyl-[ACP] + H(+) = 4-methyl-3-oxopentanoyl-[ACP] + CO2 + CoA. The enzyme catalyses (2S)-2-methylbutanoyl-CoA + malonyl-[ACP] + H(+) = (4S)-4-methyl-3-oxohexanoyl-[ACP] + CO2 + CoA. It catalyses the reaction malonyl-[ACP] + acetyl-CoA + H(+) = 3-oxobutanoyl-[ACP] + CO2 + CoA. It carries out the reaction malonyl-[ACP] + propanoyl-CoA + H(+) = 3-oxopentanoyl-[ACP] + CO2 + CoA. The catalysed reaction is butanoyl-CoA + malonyl-[ACP] + H(+) = 3-oxohexanoyl-[ACP] + CO2 + CoA. The enzyme catalyses pentanoyl-CoA + malonyl-[ACP] + H(+) = 3-oxoheptanoyl-[ACP] + CO2 + CoA. It catalyses the reaction hexanoyl-CoA + malonyl-[ACP] + H(+) = 3-oxooctanoyl-[ACP] + CO2 + CoA. It carries out the reaction heptanoyl-CoA + malonyl-[ACP] + H(+) = 3-oxononanoyl-[ACP] + CO2 + CoA. It functions in the pathway lipid metabolism; fatty acid biosynthesis. In terms of biological role, catalyzes the condensation reaction of fatty acid synthesis by the addition to an acyl acceptor of two carbons from malonyl-ACP. Catalyzes the first condensation reaction which initiates fatty acid synthesis and may therefore play a role in governing the total rate of fatty acid production. Possesses both acetoacetyl-ACP synthase and acetyl transacylase activities. Has some substrate specificity for branched chain acyl-CoA, determining the biosynthesis of branched-chain of fatty acids instead of straight-chain. The chain is Beta-ketoacyl-[acyl-carrier-protein] synthase III 2 from Bacillus subtilis (strain 168).